The chain runs to 1325 residues: RIMS-binding protein 2 (1325 aa).

Positions 153-181 (TFLSKSRSDTPRCRFDSDMDNDQNSNTSK) are disordered. A compositionally biased stretch (basic and acidic residues) spans 158–169 (SRSDTPRCRFDS). The SH3 1 domain maps to 186 to 253 (GKVHLCIARY…PSNFVDFVQD (68 aa)). 3 Fibronectin type-III domains span residues 315-408 (VPYP…GKDV), 411-493 (APSN…KKEA), and 507-608 (PPQD…VPPS). Disordered regions lie at residues 601 to 778 (SDLL…GSDL), 988 to 1010 (DLGS…KKYE), and 1040 to 1090 (AAGP…SRPM). Positions 627-641 (ETKEEHLGPHLKIDE) are enriched in basic and acidic residues. The segment covering 664-676 (FPSSLQGRRSPSP) has biased composition (polar residues). Basic and acidic residues predominate over residues 696–716 (MAREAAQRVAESNRMERRSVF). Residues 717–727 (SERSNAAQYAN) are compositionally biased toward polar residues. Composition is skewed to basic and acidic residues over residues 763-774 (CHGEDYHTESSR) and 996-1010 (PRSE…KKYE). 2 consecutive SH3 domains span residues 1121–1189 (ISTR…EIQA) and 1225–1292 (VSTR…EVPD).

This sequence belongs to the RIMBP family. In terms of assembly, interacts with RIMS1, RIMS2, CACNA1D and CACNA1B, and potentially with other Ca(2+) channel alpha-1 isoforms. As to expression, brain, cochlea and retina.

The protein resides in the cell membrane. The protein localises to the synapse. In terms of biological role, plays a role in the synaptic transmission as bifunctional linker that interacts simultaneously with RIMS1, RIMS2, CACNA1D and CACNA1B. In Gallus gallus (Chicken), this protein is RIMS-binding protein 2 (RIMBP2).